The primary structure comprises 423 residues: Adenylosuccinate synthetase (423 aa).

Residues 13–19 (GDEGKGK) and 41–43 (GHT) each bind GTP. Aspartate 14 (proton acceptor) is an active-site residue. 2 residues coordinate Mg(2+): aspartate 14 and glycine 41. IMP contacts are provided by residues 14-17 (DEGK), 39-42 (NAGH), threonine 130, arginine 144, glutamine 223, threonine 238, and arginine 302. Histidine 42 acts as the Proton donor in catalysis. 298-304 (SVTGRKR) is a binding site for substrate. Residues arginine 304 and 410 to 412 (SVG) contribute to the GTP site.

Belongs to the adenylosuccinate synthetase family. In terms of assembly, homodimer. The cofactor is Mg(2+).

Its subcellular location is the cytoplasm. It catalyses the reaction IMP + L-aspartate + GTP = N(6)-(1,2-dicarboxyethyl)-AMP + GDP + phosphate + 2 H(+). It functions in the pathway purine metabolism; AMP biosynthesis via de novo pathway; AMP from IMP: step 1/2. In terms of biological role, plays an important role in the de novo pathway of purine nucleotide biosynthesis. Catalyzes the first committed step in the biosynthesis of AMP from IMP. This chain is Adenylosuccinate synthetase, found in Porphyromonas gingivalis (strain ATCC BAA-308 / W83).